Reading from the N-terminus, the 98-residue chain is Endoribonuclease antitoxin GhoS (98 aa).

In terms of assembly, monomer. In terms of processing, unlike other TA antitoxins, this protein is stable.

Antitoxin component of a type V toxin-antitoxin (TA) system. Neutralizes the toxic effects of toxin GhoT by digesting ghoT transcripts in a sequence-specific manner. In concert with GhoT is involved in reducing cell growth during antibacterial stress. The sequence is that of Endoribonuclease antitoxin GhoS from Escherichia coli O157:H7.